The sequence spans 106 residues: UPF0145 protein BH0643 (106 aa).

It belongs to the UPF0145 family.

The chain is UPF0145 protein BH0643 from Halalkalibacterium halodurans (strain ATCC BAA-125 / DSM 18197 / FERM 7344 / JCM 9153 / C-125) (Bacillus halodurans).